The chain runs to 492 residues: Proline--tRNA ligase (492 aa).

The protein belongs to the class-II aminoacyl-tRNA synthetase family. ProS type 3 subfamily. In terms of assembly, homodimer.

Its subcellular location is the cytoplasm. It catalyses the reaction tRNA(Pro) + L-proline + ATP = L-prolyl-tRNA(Pro) + AMP + diphosphate. In terms of biological role, catalyzes the attachment of proline to tRNA(Pro) in a two-step reaction: proline is first activated by ATP to form Pro-AMP and then transferred to the acceptor end of tRNA(Pro). This Flavobacterium psychrophilum (strain ATCC 49511 / DSM 21280 / CIP 103535 / JIP02/86) protein is Proline--tRNA ligase.